A 222-amino-acid polypeptide reads, in one-letter code: Probable glutathione-independent glyoxalase hsp3104 (222 aa).

Residues Cys124, His125, and Glu155 contribute to the active site.

This sequence belongs to the peptidase C56 family. HSP31-like subfamily.

It is found in the cytoplasm. The enzyme catalyses methylglyoxal + H2O = (R)-lactate + H(+). In terms of biological role, catalyzes the conversion of methylglyoxal (MG) to D-lactate in a single glutathione (GSH)-independent step. May play a role in detoxifying endogenously produced glyoxals. Involved in protection against reactive oxygen species (ROS). This Schizosaccharomyces pombe (strain 972 / ATCC 24843) (Fission yeast) protein is Probable glutathione-independent glyoxalase hsp3104.